Here is a 337-residue protein sequence, read N- to C-terminus: DNA-directed RNA polymerase subunit alpha (337 aa).

The tract at residues 1–233 (MVREEVAGST…DLFLPFLHTE (233 aa)) is alpha N-terminal domain (alpha-NTD). Positions 267–337 (IPLNCIFIDQ…LPMDLPKNKF (71 aa)) are alpha C-terminal domain (alpha-CTD).

The protein belongs to the RNA polymerase alpha chain family. In terms of assembly, in plastids the minimal PEP RNA polymerase catalytic core is composed of four subunits: alpha, beta, beta', and beta''. When a (nuclear-encoded) sigma factor is associated with the core the holoenzyme is formed, which can initiate transcription.

It is found in the plastid. Its subcellular location is the chloroplast. The enzyme catalyses RNA(n) + a ribonucleoside 5'-triphosphate = RNA(n+1) + diphosphate. In terms of biological role, DNA-dependent RNA polymerase catalyzes the transcription of DNA into RNA using the four ribonucleoside triphosphates as substrates. This chain is DNA-directed RNA polymerase subunit alpha, found in Oryza nivara (Indian wild rice).